Consider the following 1506-residue polypeptide: MAKQGSKEKKGYPELKEVIKATCKIRVGPGKETLTEGNCLWALKTIDFIFEDLKTEPWTITKMYTVWDRLKGLTPEETSKREFASLQATLACIMCSQMGMKPETVQAAKGIISMKEGLHENKEAKGEKVEQLYPNLEKHREVYPIVNLQAGGRSWKAVESVVFQQLQTVAMQHGLVSEDFERQLAYYATTWTSKDILEVLAMMPGNRAQKELIQGKLNEEAERWVRQNPPGPNVLTVDQIMGVGQTNQQASQANMDQARQICLQWVITALRSVRHMSHRPGNPMLVKQKNTESYEDFIARLLEAIDAEPVTDPIKTYLKVTLSYTNASTDCQKQMDRTLGTRVQQATVEEKMQACRDVGSEGFKMQLLAQALRPQGKAGQKGVNQKCYNCGKPGHLARQCRQGIICHHCGKRGHMQKDCRQKKQQGKQQEGATCGAVRAPYVVTEAPPKIEIKVGTRWKKLLVDTGADKTIVTSHDMSGIPKGRIILQGIGGIIEGEKWEQVHLQYKDKIIRGTIVVLATSPVEVLGRDNMRELGIGLIMANLEEKKIPSTRVRLKEGCKGPHIAQWPLTQEKLEGLKEIVDRLEKEGKVGRAPPHWTCNTPIFCIKKKSGKWRMLIDFRELNKQTEDLAEAQLGLPHPGGLQRKKHVTILDIGDAYFTIPLYEPYRQYTCFTMLSPNNLGPCVRYYWKVLPQGWKLSPAVYQFTMQKILRGWIEEHPMIQFGIYMDDIYIGSDLGLEEHRGIVNELASYIAQYGFMLPEDKRQEGYPAKWLGFELHPEKWKFQKHTLPEITEGPITLNKLQKLVGDLVWRQSLIGKSIPNILKLMEGDRALQSERYIESIHVREWEACRQKLKEMEGNYYDEEKDIYGQLDWGNKAIEYIVFQEKGKPLWVNVVHSIKNLSQAQQIIKAAQKLTQEVIIRTGKIPWILLPGREEDWILELQMGNINWMPSFWSCYKGSVRWKKRNVIAEVVPGPTYYTDGGKKNGRGSLGYITSTGEKFRIHEEGTNQQLELRAIEEACKQGPEKMNIVTDSRYAYEFMLRNWDEEVIRNPIQARIMELVHNKEKIGVHWVPGHKGIPQNEEIDRYISEIFLAKEGRGILQKRAEDAGYDLICPQEISIPAGQVKRIAIDLKINLKKDQWAMIGTKSSFANKGVFVQGGIIDSGYQGTIQVVIYNSNNKEVVIPQGRKFAQLILMPLIHEELEPWGETRKTERGEQGFGSTGMYWIENIPLAEEEHNKWHQDAVSLHLEFGIPRTAAEDIVQQCDVCQENKMPSTLRGSNKRGIDHWQVDYTHYEDKIILVWVETNSGLIYAERVKGETGQEFRVQTMKWYAMFAPKSLQSDNGPAFVAESTQLLMKYLGIEHTTGIPWNPQSQALVERTHQTLKNTLEKLIPMFNAFESALAGTLITLNIKRKGGLGTSPMDIFIFNKEQQRIQQQSKSKQEKIRFCYYRTRKRGHPGEWQGPTQVLWGGDGAIVVKDRGTDRYLVIANKDVKFIPPPKEIQKE.

2 consecutive CCHC-type zinc fingers follow at residues 385-402 (QKCY…QCRQ) and 404-421 (IICH…DCRQ). One can recognise a Peptidase A2 domain in the interval 459–530 (KKLLVDTGAD…SPVEVLGRDN (72 aa)). The Protease; shared with dimeric partner role is filled by Asp-464. The Reverse transcriptase domain maps to 587–776 (EGKVGRAPPH…YPAKWLGFEL (190 aa)). 7 residues coordinate Mg(2+): Asp-652, Asp-727, Asp-728, Asp-980, Glu-1012, Asp-1032, and Asp-1085. Positions 971-1093 (VVPGPTYYTD…IDRYISEIFL (123 aa)) constitute an RNase H type-1 domain. The Integrase-type zinc-finger motif lies at 1228 to 1269 (ENIPLAEEEHNKWHQDAVSLHLEFGIPRTAAEDIVQQCDVCQ). Zn(2+) contacts are provided by His-1237, His-1241, Cys-1265, and Cys-1268. The Integrase catalytic domain occupies 1270–1430 (ENKMPSTLRG…SPMDIFIFNK (161 aa)). The Mg(2+) site is built by Asp-1291, Asp-1343, and Glu-1379. Residues 1447–1499 (RFCYYRTRKRGHPGEWQGPTQVLWGGDGAIVVKDRGTDRYLVIANKDVKFIPP) constitute a DNA-binding region (integrase-type).

It belongs to the retroviral Pol polyprotein family. As to quaternary structure, homotetramer; further associates as a homohexadecamer. Mg(2+) serves as cofactor. Specific enzymatic cleavages by the viral protease yield mature proteins.

It is found in the virion. It carries out the reaction 3'-end directed exonucleolytic cleavage of viral RNA-DNA hybrid.. It catalyses the reaction Endonucleolytic cleavage to 5'-phosphomonoester.. The catalysed reaction is dUTP + H2O = dUMP + diphosphate + H(+). The enzyme catalyses DNA(n) + a 2'-deoxyribonucleoside 5'-triphosphate = DNA(n+1) + diphosphate. Functionally, mediates, with Gag polyprotein, the essential events in virion assembly, including binding the plasma membrane, making the protein-protein interactions necessary to create spherical particles, recruiting the viral Env proteins, and packaging the genomic RNA via direct interactions with the RNA packaging sequence. Its function is as follows. Targets the polyprotein to the plasma membrane. Forms the core that encapsulates the genomic RNA-nucleocapsid complex in the virion. In terms of biological role, encapsulates and protects viral dimeric unspliced genomic RNA (gRNA). Binds these RNAs through its zinc fingers. Acts as a nucleic acid chaperone which is involved in rearrangement of nucleic acid secondary structure during gRNA retrotranscription. Also facilitates template switch leading to recombination. Functionally, the aspartyl protease mediates proteolytic cleavages of Gag and Gag-Pol polyproteins during or shortly after the release of the virion from the plasma membrane. Cleavages take place as an ordered, step-wise cascade to yield mature proteins. This process is called maturation. Displays maximal activity during the budding process just prior to particle release from the cell. Its function is as follows. RT is a multifunctional enzyme that converts the viral dimeric RNA genome into dsDNA in the cytoplasm, shortly after virus entry into the cell. This enzyme displays a DNA polymerase activity that can copy either DNA or RNA templates, and a ribonuclease H (RNase H) activity that cleaves the RNA strand of RNA-DNA heteroduplexes in a partially processive 3' to 5' endonucleasic mode. Conversion of viral genomic RNA into dsDNA requires many steps. A tRNA binds to the primer-binding site (PBS) situated at the 5' end of the viral RNA. RT uses the 3' end of the tRNA primer to perfom a short round of RNA-dependent minus-strand DNA synthesis. The reading proceeds through the U5 region and ends after the repeated (R) region which is present at both ends of viral RNA. The portion of the RNA-DNA heteroduplex is digested by the RNase H, resulting in a ssDNA product attached to the tRNA primer. This ssDNA/tRNA hybridizes with the identical R region situated at the 3' end of viral RNA. This template exchange, known as minus-strand DNA strong stop transfer, can be either intra- or intermolecular. RT uses the 3' end of this newly synthesized short ssDNA to perfom the RNA-dependent minus-strand DNA synthesis of the whole template. RNase H digests the RNA template except for a polypurine tract (PPT) situated at the 5' end of the genome. It is not clear if both polymerase and RNase H activities are simultaneous. RNase H probably can proceed both in a polymerase-dependent (RNA cut into small fragments by the same RT performing DNA synthesis) and a polymerase-independent mode (cleavage of remaining RNA fragments by free RTs). Secondly, RT performs DNA-directed plus-strand DNA synthesis using the PPT that has not been removed by RNase H as primers. PPT and tRNA primers are then removed by RNase H. The 3' and 5' ssDNA PBS regions hybridize to form a circular dsDNA intermediate. Strand displacement synthesis by RT to the PBS and PPT ends produces a blunt ended, linear dsDNA copy of the viral genome that includes long terminal repeats (LTRs) at both ends. Catalyzes viral DNA integration into the host chromosome, by performing a series of DNA cutting and joining reactions. This Maedi visna virus (strain KV1772) (MVV) protein is Gag-Pol polyprotein (pol).